We begin with the raw amino-acid sequence, 171 residues long: I (171 aa).

2 disordered regions span residues 57–100 (IQYP…LFAQ) and 143–171 (PRTS…KRRA). The segment covering 151–162 (EFKRGGGRERLP) has biased composition (basic and acidic residues).

It belongs to the Orthorubulavirus I protein family.

This chain is I, found in Mumps virus genotype N (strain L-Zagreb vaccine) (MuV).